The sequence spans 290 residues: Nucleoid occlusion protein (290 aa).

Positions 153 to 172 form a DNA-binding region, H-T-H motif; it reads EALAQRLGKGQSTIANKLRL.

Belongs to the ParB family.

The protein localises to the cytoplasm. It is found in the nucleoid. In terms of biological role, effects nucleoid occlusion by binding relatively nonspecifically to DNA and preventing the assembly of the division machinery in the vicinity of the nucleoid, especially under conditions that disturb the cell cycle. It helps to coordinate cell division and chromosome segregation by preventing the formation of the Z ring through the nucleoid, which would cause chromosome breakage. In Bacillus cereus (strain G9842), this protein is Nucleoid occlusion protein.